A 79-amino-acid polypeptide reads, in one-letter code: uncharacterized protein (79 aa).

2 helical membrane-spanning segments follow: residues 28–48 (CIIL…ALLA) and 51–71 (VALT…AFTV).

The protein resides in the cell membrane. This is an uncharacterized protein from Methanocaldococcus jannaschii (strain ATCC 43067 / DSM 2661 / JAL-1 / JCM 10045 / NBRC 100440) (Methanococcus jannaschii).